Reading from the N-terminus, the 1141-residue chain is DNA-directed RNA polymerase subunit beta (1141 aa).

Residues 1117–1141 (GINISREEPPGQLDDTPDTFSRGGM) form a disordered region.

The protein belongs to the RNA polymerase beta chain family. The RNAP catalytic core consists of 2 alpha, 1 beta, 1 beta' and 1 omega subunit. When a sigma factor is associated with the core the holoenzyme is formed, which can initiate transcription.

It carries out the reaction RNA(n) + a ribonucleoside 5'-triphosphate = RNA(n+1) + diphosphate. Its function is as follows. DNA-dependent RNA polymerase catalyzes the transcription of DNA into RNA using the four ribonucleoside triphosphates as substrates. The polypeptide is DNA-directed RNA polymerase subunit beta (Rubrobacter xylanophilus (strain DSM 9941 / JCM 11954 / NBRC 16129 / PRD-1)).